Consider the following 673-residue polypeptide: MSVPAEVVEKARKLREEIEFHNVRYYRLDDPLITDAEYDRLMAELLAIEARYPELVTPDSPTQRVGAPPVEAFTEVRHEVPMLSLENAFSEEDLTAFDRRVRKELSRDTLEYVAEPKLDGLAVNLLYQDGVLVRAATRGDGEVGEDVTHNVRAVRAIPLRLKGEDFPDRFEARGEVFMPKRGFLALNERARRSGEKTFVNPRNAAAGSLRQLDARVTASRPLSFYAYGIGAFPDARLPATQHELLESLQRWGLPVSPEYRVVRGAAGCLEYYRSLGERRHDLPYDIDGVVYKVDDLKAQAGLGFVSRAPRWAIAHKFPAEEARTRVVGIDVQVGRTGVLTPVARLEPVFVGGVTVTNATLHNADEIRRKDVRPGDTVIVRRAGDVIPEIVRVVPELRKPGAEPFRMPEVCPECGSAVEAEPGEVLARCSGGLYCPAQHKESIKHFASRRAMDIEGLGDKLVDQLVGRKLIATVADLYRLDLDRLAGLDRMGEKSAANLLAALERSKRTTLARFLYALGIRDVGEVTAKVLSEHFGSLEALMEATEEELLAVADVGPVVSRHIRLFFAQPHNREVISQLLACGVSWEKPAPAPRKLPLQGLVFVLTGTLASMSRDEARARLEALGAKCTGSVSRNTSFVVAGSEPGSKLDKASELGVPVLDEKGFLDLLERGRP.

NAD(+)-binding positions include 35–39 (DAEYD), 84–85 (SL), and Glu-115. Catalysis depends on Lys-117, which acts as the N6-AMP-lysine intermediate. Positions 138, 175, 292, and 316 each coordinate NAD(+). Positions 410, 413, 428, and 434 each coordinate Zn(2+). The region spanning 592-673 (PRKLPLQGLV…FLDLLERGRP (82 aa)) is the BRCT domain.

Belongs to the NAD-dependent DNA ligase family. LigA subfamily. Requires Mg(2+) as cofactor. Mn(2+) is required as a cofactor.

It carries out the reaction NAD(+) + (deoxyribonucleotide)n-3'-hydroxyl + 5'-phospho-(deoxyribonucleotide)m = (deoxyribonucleotide)n+m + AMP + beta-nicotinamide D-nucleotide.. In terms of biological role, DNA ligase that catalyzes the formation of phosphodiester linkages between 5'-phosphoryl and 3'-hydroxyl groups in double-stranded DNA using NAD as a coenzyme and as the energy source for the reaction. It is essential for DNA replication and repair of damaged DNA. The chain is DNA ligase from Methylococcus capsulatus (strain ATCC 33009 / NCIMB 11132 / Bath).